The following is a 99-amino-acid chain: Class II hydrophobin 3 (99 aa).

An N-terminal signal peptide occupies residues 1 to 18; the sequence is MRIDILATAALLAQLASA. 3 disulfide bridges follow: cysteine 31–cysteine 79, cysteine 40–cysteine 70, and cysteine 41–cysteine 53.

This sequence belongs to the cerato-ulmin hydrophobin family. Homodimer. Homodimers further self-assemble to form highly ordered films at water-air interfaces through intermolecular interactions.

The protein resides in the secreted. Its subcellular location is the cell wall. Functionally, aerial growth, conidiation, and dispersal of filamentous fungi in the environment rely upon a capability of their secreting small amphipathic proteins called hydrophobins (HPBs) with low sequence identity. Class I can self-assemble into an outermost layer of rodlet bundles on aerial cell surfaces, conferring cellular hydrophobicity that supports fungal growth, development and dispersal; whereas Class II form highly ordered films at water-air interfaces through intermolecular interactions but contribute nothing to the rodlet structure. Hyd3 is a class II hydrophobin required for barley root colonization. Hyd1 and Hyd3 are jointly required for conidial hydrophobicity and dispersal, but seem not to be involved in mycelia hydrophobicity. Inhibits conidial germination in environments not suitable for mycelial growth. Plays probably a role in intraspecific signaling or hyphal fusion. This chain is Class II hydrophobin 3, found in Bionectria ochroleuca (Gliocladium roseum).